The chain runs to 262 residues: Aquaporin TIP3-1 (262 aa).

The next 2 helical transmembrane spans lie at 27 to 47 and 61 to 81; these read AAIS…GSVL and GLVA…AVAV. Residues 89 to 91 carry the NPA 1 motif; sequence NPA. 3 helical membrane passes run 104–124, 148–168, and 175–195; these read LVRA…ATLL, AVLL…ATVI, and VGTI…LAGG. Residues 203-205 carry the NPA 2 motif; that stretch reads NPA. The helical transmembrane segment at 223–243 threads the bilayer; sequence YWLGPFLGAGLAGLVYEYLVI.

This sequence belongs to the MIP/aquaporin (TC 1.A.8) family. TIP (TC 1.A.8.10) subfamily.

Its subcellular location is the vacuole membrane. Its function is as follows. Aquaporins facilitate the transport of water and small neutral solutes across cell membranes. This Zea mays (Maize) protein is Aquaporin TIP3-1 (TIP3-1).